The primary structure comprises 396 residues: Elongation factor Tu 1 (396 aa).

In terms of domain architecture, tr-type G spans 10–206 (KPHVNVGTIG…ALDTYIPTPE (197 aa)). Residues 19 to 26 (GHVDHGKT) are G1. 19 to 26 (GHVDHGKT) contacts GTP. Residue threonine 26 participates in Mg(2+) binding. Residues 60-64 (GITIN) are G2. Positions 81 to 84 (DCPG) are G3. Residues 81–85 (DCPGH) and 136–139 (NKCD) contribute to the GTP site. The interval 136-139 (NKCD) is G4. The interval 174–176 (SAK) is G5.

It belongs to the TRAFAC class translation factor GTPase superfamily. Classic translation factor GTPase family. EF-Tu/EF-1A subfamily. In terms of assembly, monomer.

It is found in the cytoplasm. It carries out the reaction GTP + H2O = GDP + phosphate + H(+). GTP hydrolase that promotes the GTP-dependent binding of aminoacyl-tRNA to the A-site of ribosomes during protein biosynthesis. The sequence is that of Elongation factor Tu 1 from Acidovorax sp. (strain JS42).